A 398-amino-acid chain; its full sequence is Chalcone synthase (398 aa).

C167 is an active-site residue.

This sequence belongs to the thiolase-like superfamily. Chalcone/stilbene synthases family.

It catalyses the reaction (E)-4-coumaroyl-CoA + 3 malonyl-CoA + 3 H(+) = 2',4,4',6'-tetrahydroxychalcone + 3 CO2 + 4 CoA. It functions in the pathway secondary metabolite biosynthesis; flavonoid biosynthesis. Functionally, the primary product of this enzyme is 4,2',4',6'-tetrahydroxychalcone (also termed naringenin-chalcone or chalcone) which can under specific conditions spontaneously isomerize into naringenin. This chain is Chalcone synthase (CHS), found in Callistephus chinensis (China aster).